The chain runs to 355 residues: MKIAVLPGDGIGPEIVNEAVKVLNALDEKFELEQAPVGGAGYEASGHPLPDATLALAKEADAILFGAVGDWKYDSLERALRPEQAILGLRKHLELFANFRPAICYPQLVDASPLKPELVAGLDILIVRELNGDIYFGQPRGVRAAPDGPFAGAREGFDTMRYSEPEVRRIAHVAFQAARKRAKKLLSVDKSNVLETSQFWRDVMIDVSKEYADVELSHMYVDNAAMQLAKAPKQFDVIVTGNMFGDILSDEASMLTGSIGMLPSASLDQRNKGLYEPSHGSAPDIAGKGIANPLATILSAAMLLRYSLNRAEQADRIERAVKAVLEQGYRTGDIATPGCKQVGTAAMGDAVVAAL.

Residues Arg90, Arg100, Arg128, and Asp222 each contribute to the substrate site. Residues Asp222, Asp246, and Asp250 each contribute to the Mg(2+) site. 280–292 (GSAPDIAGKGIAN) contacts NAD(+).

Belongs to the isocitrate and isopropylmalate dehydrogenases family. LeuB type 1 subfamily. Homodimer. The cofactor is Mg(2+). Mn(2+) is required as a cofactor.

Its subcellular location is the cytoplasm. It carries out the reaction (2R,3S)-3-isopropylmalate + NAD(+) = 4-methyl-2-oxopentanoate + CO2 + NADH. It functions in the pathway amino-acid biosynthesis; L-leucine biosynthesis; L-leucine from 3-methyl-2-oxobutanoate: step 3/4. In terms of biological role, catalyzes the oxidation of 3-carboxy-2-hydroxy-4-methylpentanoate (3-isopropylmalate) to 3-carboxy-4-methyl-2-oxopentanoate. The product decarboxylates to 4-methyl-2 oxopentanoate. The protein is 3-isopropylmalate dehydrogenase of Burkholderia mallei (strain ATCC 23344).